We begin with the raw amino-acid sequence, 152 residues long: MRLRVLWVGKSREEWVKQALADYATRIRRYAPLELVEVRDEKGAMAEEMRRRECERLEKQIPPGATLLLLDERGEQMDSPGLAAYIGKQRDSGTADLVLVIGGAYGFSDAFRRRGRLLSLSPMTFTHQMVRVFLLEQLYRSFTILNNEPYHH.

S-adenosyl-L-methionine-binding positions include Leu-70, Gly-102, and 120–125 (LSPMTF).

The protein belongs to the RNA methyltransferase RlmH family. Homodimer.

The protein localises to the cytoplasm. The enzyme catalyses pseudouridine(1915) in 23S rRNA + S-adenosyl-L-methionine = N(3)-methylpseudouridine(1915) in 23S rRNA + S-adenosyl-L-homocysteine + H(+). In terms of biological role, specifically methylates the pseudouridine at position 1915 (m3Psi1915) in 23S rRNA. The protein is Ribosomal RNA large subunit methyltransferase H of Pelobacter propionicus (strain DSM 2379 / NBRC 103807 / OttBd1).